Reading from the N-terminus, the 39-residue chain is Potassium channel toxin alpha-KTx 2.1 (39 aa).

Disulfide bonds link cysteine 7–cysteine 29, cysteine 13–cysteine 34, and cysteine 17–cysteine 36. The interval 26–34 (GAKCMNGKC) is interaction with Ca(2+)-activated K(+) channels. At asparagine 39 the chain carries Asparagine amide.

The protein belongs to the short scorpion toxin superfamily. Potassium channel inhibitor family. Alpha-KTx 02 subfamily. In terms of tissue distribution, expressed by the venom gland.

The protein localises to the secreted. Blocks voltage-gated potassium channels (mKv1.1/KCNA1 (Kd&gt;25 nM), rKv1.2/KCNA2 (Kd=2 nM), mKv1.3/KCNA3 (Kd=1 nM), hKv1.5/KCNA5 (Kd&gt;25 nM) and mKv3.1/KCNC1 (Kd&gt;25 nM)) and calcium-activated potassium channels (KCa1.1/KCNMA1 and KCa3.1/KCNN4, Kd&gt;25 nM). The chain is Potassium channel toxin alpha-KTx 2.1 from Centruroides noxius (Mexican scorpion).